We begin with the raw amino-acid sequence, 239 residues long: MSLRAVVLTLFPEMFPGPLGHSIAGKALETGAWSIEAVDIRSFATDRHHTVDDSPFGGGAGMVMRPDVVDAAIAASWPGDGPLVYLTPRGRVLDQALVRELAQAPSLTLLCGRYEGVDQRVLDERGMLEISIGDYVLSGGEAAAQVLLDAVVRLLPGVVGKTESLEDESFERGLLEYPHYTRPAEWRGRTVPEVLTSGHHQKVSDWRQARSEEITQTRRPDLWARYVAARTSLDRGCGQ.

Residues G112 and 132–137 (IGDYVL) contribute to the S-adenosyl-L-methionine site.

The protein belongs to the RNA methyltransferase TrmD family. As to quaternary structure, homodimer.

It localises to the cytoplasm. The enzyme catalyses guanosine(37) in tRNA + S-adenosyl-L-methionine = N(1)-methylguanosine(37) in tRNA + S-adenosyl-L-homocysteine + H(+). Its function is as follows. Specifically methylates guanosine-37 in various tRNAs. This Rhodospirillum rubrum (strain ATCC 11170 / ATH 1.1.1 / DSM 467 / LMG 4362 / NCIMB 8255 / S1) protein is tRNA (guanine-N(1)-)-methyltransferase.